A 551-amino-acid chain; its full sequence is Urocanate hydratase (551 aa).

NAD(+) contacts are provided by residues G48–G49, Q126, G172–G174, E192, R197, N238–A239, Q259–H263, Y269–I270, and Y318. The active site involves C406. Residue G488 coordinates NAD(+).

This sequence belongs to the urocanase family. NAD(+) serves as cofactor.

It localises to the cytoplasm. It carries out the reaction 4-imidazolone-5-propanoate = trans-urocanate + H2O. It participates in amino-acid degradation; L-histidine degradation into L-glutamate; N-formimidoyl-L-glutamate from L-histidine: step 2/3. Functionally, catalyzes the conversion of urocanate to 4-imidazolone-5-propionate. The polypeptide is Urocanate hydratase (Geobacillus kaustophilus (strain HTA426)).